The primary structure comprises 286 residues: Transcription factor bHLH137 (286 aa).

The span at 63 to 84 (SGSEKLANTTKTATTGSSSCDQ) shows a compositional bias: polar residues. Residues 63–149 (SGSEKLANTT…RGQATDSHSL (87 aa)) form a disordered region. Residues 142–192 (QATDSHSLAERVRREKISERMRTLQNLVPGCDKVTGKALMLDEIINYVQTL) enclose the bHLH domain.

As to quaternary structure, homodimer.

The protein localises to the nucleus. This is Transcription factor bHLH137 (BHLH137) from Arabidopsis thaliana (Mouse-ear cress).